A 115-amino-acid chain; its full sequence is Transcription initiation factor IIA subunit 2 (115 aa).

Belongs to the TFIIA subunit 2 family. In terms of assembly, TFIIA is a heterodimer of the large unprocessed subunit 1 and a small subunit gamma.

Its subcellular location is the nucleus. Its function is as follows. TFIIA is a component of the transcription machinery of RNA polymerase II and plays an important role in transcriptional activation. TFIIA in a complex with tbp mediates transcriptional activity. In Dictyostelium discoideum (Social amoeba), this protein is Transcription initiation factor IIA subunit 2 (gtf2a2).